The following is a 235-amino-acid chain: MVNKNINDIPPILCCSNIIKRYQYSNFSITVLDGITMSIEYNKIIAIIGASGSGKSTLLHIMGGLDKPTSGDVFLEGRALNKLSDKDCSIMRNTSIGFIYQFHHLLPDFSVLENIAMPLLIKGLKFAIAKHKAQFILELIGLNNLCDRYPCELSGGESQRVAVARAIINNPPLVLADEPTGNLDESNSNNVFKLLEKINLWYGTTFVIATHDLSLAKKCHKIYIVSNGMLKISTI.

One can recognise an ABC transporter domain in the interval 13–235 (LCCSNIIKRY…SNGMLKISTI (223 aa)). 49 to 56 (GASGSGKS) lines the ATP pocket.

This sequence belongs to the ABC transporter superfamily. Lipoprotein translocase (TC 3.A.1.125) family. The complex is composed of two ATP-binding proteins (LolD) and two transmembrane proteins (LolC and LolE).

Its subcellular location is the cell inner membrane. Its function is as follows. Part of the ABC transporter complex LolCDE involved in the translocation of mature outer membrane-directed lipoproteins, from the inner membrane to the periplasmic chaperone, LolA. Responsible for the formation of the LolA-lipoprotein complex in an ATP-dependent manner. In Blochmanniella floridana, this protein is Lipoprotein-releasing system ATP-binding protein LolD.